Here is a 368-residue protein sequence, read N- to C-terminus: Quinolinate synthase (368 aa).

Iminosuccinate-binding residues include His-46 and Ser-63. Cys-110 is a binding site for [4Fe-4S] cluster. Iminosuccinate-binding positions include Tyr-141 to Asn-143 and Ser-162. Residue Cys-230 participates in [4Fe-4S] cluster binding. Iminosuccinate-binding positions include His-256–Glu-258 and Thr-273. Cys-320 is a [4Fe-4S] cluster binding site.

Belongs to the quinolinate synthase family. Type 3 subfamily. [4Fe-4S] cluster serves as cofactor.

Its subcellular location is the cytoplasm. The catalysed reaction is iminosuccinate + dihydroxyacetone phosphate = quinolinate + phosphate + 2 H2O + H(+). The protein operates within cofactor biosynthesis; NAD(+) biosynthesis; quinolinate from iminoaspartate: step 1/1. Functionally, catalyzes the condensation of iminoaspartate with dihydroxyacetone phosphate to form quinolinate. This Bacillus cereus (strain G9842) protein is Quinolinate synthase.